The sequence spans 1072 residues: Carbamoyl phosphate synthase large chain (1072 aa).

Positions 1–401 are carboxyphosphate synthetic domain; the sequence is MPKYKDINKV…SLLKAVRSLE (401 aa). Positions 129, 169, 175, 176, 208, 210, 215, 241, 242, 243, 284, and 298 each coordinate ATP. Residues 133-327 enclose the ATP-grasp 1 domain; sequence KRKMQEIGEP…IAKVAAKIAI (195 aa). The Mg(2+) site is built by Q284, E298, and N300. 3 residues coordinate Mn(2+): Q284, E298, and N300. Residues 402 to 544 form an oligomerization domain region; that stretch reads IKAYGLRLNN…YIYSTYGEED (143 aa). Residues 545-929 form a carbamoyl phosphate synthetic domain region; sequence EVEIHEIPKV…ALYKALEGAG (385 aa). The ATP-grasp 2 domain occupies 671–861; the sequence is SKLLKELNIN…MVKLAVEVAL (191 aa). ATP is bound by residues R707, K746, I748, E752, G777, V778, H779, S780, Q820, and E832. Mg(2+) contacts are provided by Q820, E832, and N834. The Mn(2+) site is built by Q820, E832, and N834. Residues 930–1072 enclose the MGS-like domain; the sequence is LKIPKKGKIL…QKDNVKNLVL (143 aa). The interval 930–1072 is allosteric domain; sequence LKIPKKGKIL…QKDNVKNLVL (143 aa).

It belongs to the CarB family. Composed of two chains; the small (or glutamine) chain promotes the hydrolysis of glutamine to ammonia, which is used by the large (or ammonia) chain to synthesize carbamoyl phosphate. Tetramer of heterodimers (alpha,beta)4. It depends on Mg(2+) as a cofactor. Requires Mn(2+) as cofactor.

It carries out the reaction hydrogencarbonate + L-glutamine + 2 ATP + H2O = carbamoyl phosphate + L-glutamate + 2 ADP + phosphate + 2 H(+). The enzyme catalyses hydrogencarbonate + NH4(+) + 2 ATP = carbamoyl phosphate + 2 ADP + phosphate + 2 H(+). The protein operates within amino-acid biosynthesis; L-arginine biosynthesis; carbamoyl phosphate from bicarbonate: step 1/1. It functions in the pathway pyrimidine metabolism; UMP biosynthesis via de novo pathway; (S)-dihydroorotate from bicarbonate: step 1/3. Large subunit of the glutamine-dependent carbamoyl phosphate synthetase (CPSase). CPSase catalyzes the formation of carbamoyl phosphate from the ammonia moiety of glutamine, carbonate, and phosphate donated by ATP, constituting the first step of 2 biosynthetic pathways, one leading to arginine and/or urea and the other to pyrimidine nucleotides. The large subunit (synthetase) binds the substrates ammonia (free or transferred from glutamine from the small subunit), hydrogencarbonate and ATP and carries out an ATP-coupled ligase reaction, activating hydrogencarbonate by forming carboxy phosphate which reacts with ammonia to form carbamoyl phosphate. The sequence is that of Carbamoyl phosphate synthase large chain from Thermoanaerobacter sp. (strain X514).